The primary structure comprises 184 residues: ESX-1 secretion-associated protein EspD (184 aa).

The segment at 33–56 (IGVGSAATPDTGPDLDNAHGQAET) is disordered.

The protein localises to the secreted. In terms of biological role, required for ESX-1 function. Required for the maintenance of adequate cellular levels of both EspA and EspC. Facilitates EsxA secretion. The polypeptide is ESX-1 secretion-associated protein EspD (Mycobacterium tuberculosis (strain CDC 1551 / Oshkosh)).